We begin with the raw amino-acid sequence, 207 residues long: Methylated-DNA--protein-cysteine methyltransferase (207 aa).

Cys5 contributes to the Zn(2+) binding site. Ser14 bears the Phosphoserine mark. Zn(2+) contacts are provided by Cys24, His29, and His85. Positions 95, 114, 115, 123, and 128 each coordinate DNA. Cys145 functions as the Nucleophile; methyl group acceptor in the catalytic mechanism. Residue Ser151 participates in DNA binding. A Phosphoserine modification is found at Ser201.

The protein belongs to the MGMT family. It depends on Zn(2+) as a cofactor.

The protein resides in the nucleus. The enzyme catalyses a 6-O-methyl-2'-deoxyguanosine in DNA + L-cysteinyl-[protein] = S-methyl-L-cysteinyl-[protein] + a 2'-deoxyguanosine in DNA. It carries out the reaction a 4-O-methyl-thymidine in DNA + L-cysteinyl-[protein] = a thymidine in DNA + S-methyl-L-cysteinyl-[protein]. Involved in the cellular defense against the biological effects of O6-methylguanine (O6-MeG) and O4-methylthymine (O4-MeT) in DNA. Repairs the methylated nucleobase in DNA by stoichiometrically transferring the methyl group to a cysteine residue in the enzyme. This is a suicide reaction: the enzyme is irreversibly inactivated. The protein is Methylated-DNA--protein-cysteine methyltransferase (MGMT) of Homo sapiens (Human).